Reading from the N-terminus, the 514-residue chain is Tryptophan decarboxylase 1 (514 aa).

Serotonin is bound at residue F104. Pyridoxal 5'-phosphate is bound by residues T175 and S176. H214 contributes to the serotonin binding site. T273 serves as a coordination point for pyridoxal 5'-phosphate. The residue at position 330 (K330) is an N6-(pyridoxal phosphate)lysine. Y359 serves as the catalytic Proton donor. Residues V380 and G381 each coordinate pyridoxal 5'-phosphate.

It belongs to the group II decarboxylase family. As to quaternary structure, forms homodimers. It depends on pyridoxal 5'-phosphate as a cofactor.

The enzyme catalyses L-tryptophan + H(+) = tryptamine + CO2. The catalysed reaction is 5-hydroxy-L-tryptophan + H(+) = serotonin + CO2. Functionally, involved in serotonin biosynthesis. Catalyzes the decarboxylation of L-tryptophan to produce tryptamine, which is converted to serotonin by tryptamine 5-hydroxylase. May play a major role in serotonin biosynthesis during senescence. Accumulation of serotonin attenuates leaf senescence. Catalyzes the decarboxylation of 5-hydroxy-L-tryptophan to produce serotonin. In Oryza sativa subsp. japonica (Rice), this protein is Tryptophan decarboxylase 1.